Reading from the N-terminus, the 542-residue chain is Phosphoglucomutase (542 aa).

Substrate is bound by residues T17, R21, 112 to 113, and K125; that span reads SH. S112 functions as the Phosphoserine intermediate in the catalytic mechanism. S112 contacts Mg(2+). Mg(2+) is bound by residues D276, D278, and D280. Residues 280–281, T343, 362–364, K375, and R495 contribute to the substrate site; these read DR and EES.

Belongs to the phosphohexose mutase family. Mg(2+) is required as a cofactor.

The catalysed reaction is alpha-D-glucose 1-phosphate = alpha-D-glucose 6-phosphate. In terms of biological role, this enzyme participates in both the breakdown and synthesis of glucose. Required for the synthesis of capsular polysaccharide and normal lipopolysaccharide. The protein is Phosphoglucomutase (pgm) of Rhizobium radiobacter (Agrobacterium tumefaciens).